A 463-amino-acid chain; its full sequence is Cysteine--tRNA ligase (463 aa).

C28 contributes to the Zn(2+) binding site. The short motif at V30–H40 is the 'HIGH' region element. Residues C209, H234, and E238 each coordinate Zn(2+). The 'KMSKS' region signature appears at K266–S270. Position 269 (K269) interacts with ATP.

It belongs to the class-I aminoacyl-tRNA synthetase family. As to quaternary structure, monomer. Zn(2+) is required as a cofactor.

Its subcellular location is the cytoplasm. The catalysed reaction is tRNA(Cys) + L-cysteine + ATP = L-cysteinyl-tRNA(Cys) + AMP + diphosphate. This Tolumonas auensis (strain DSM 9187 / NBRC 110442 / TA 4) protein is Cysteine--tRNA ligase.